A 380-amino-acid polypeptide reads, in one-letter code: MTDYPIKYRLIKKEKHTGARLGEIITPHGTFPTPMFMPVGTQATVKTQSPEELKAMGSGIILSNTYHLWLRPGDELIAKAGGLHKFMNWDQPILTDSGGFQVYSLADSRNITEEGVTFKNHLNGSKMFLSPEKAISIQNNLGSDIMMSFDECPQFYQPYDYVKKSIERTSRWAERGLKAHRRPHDQGLFGIVQGAGFEDLRRQSAADLVSMDFPGYSVGGLAVGESHEEMNAVLDFTTPLLPENKPRYLMGVGAPDSLIDGVIRGIDMFDCVLPTRIARNGTCMTSEGRLVVKNAKFAEDFTPLDHDCDCYTCQNYTRAYIRHLLKADETFGIRLTSYHNLYFLVNLMKKVRQAIMDDNLLEFREDFLERYGYNTSNRNF.

Asp-96 serves as the catalytic Proton acceptor. Substrate contacts are provided by residues 96-100, Asp-150, Gln-193, and Gly-220; that span reads DSGGF. The interval 251 to 257 is RNA binding; the sequence is GVGAPDS. The active-site Nucleophile is the Asp-270. The tract at residues 275–279 is RNA binding; important for wobble base 34 recognition; the sequence is TRIAR. Positions 308, 310, 313, and 339 each coordinate Zn(2+).

This sequence belongs to the queuine tRNA-ribosyltransferase family. Homodimer. Within each dimer, one monomer is responsible for RNA recognition and catalysis, while the other monomer binds to the replacement base PreQ1. It depends on Zn(2+) as a cofactor.

It carries out the reaction 7-aminomethyl-7-carbaguanine + guanosine(34) in tRNA = 7-aminomethyl-7-carbaguanosine(34) in tRNA + guanine. Its pathway is tRNA modification; tRNA-queuosine biosynthesis. Functionally, catalyzes the base-exchange of a guanine (G) residue with the queuine precursor 7-aminomethyl-7-deazaguanine (PreQ1) at position 34 (anticodon wobble position) in tRNAs with GU(N) anticodons (tRNA-Asp, -Asn, -His and -Tyr). Catalysis occurs through a double-displacement mechanism. The nucleophile active site attacks the C1' of nucleotide 34 to detach the guanine base from the RNA, forming a covalent enzyme-RNA intermediate. The proton acceptor active site deprotonates the incoming PreQ1, allowing a nucleophilic attack on the C1' of the ribose to form the product. After dissociation, two additional enzymatic reactions on the tRNA convert PreQ1 to queuine (Q), resulting in the hypermodified nucleoside queuosine (7-(((4,5-cis-dihydroxy-2-cyclopenten-1-yl)amino)methyl)-7-deazaguanosine). The polypeptide is Queuine tRNA-ribosyltransferase (Streptococcus uberis (strain ATCC BAA-854 / 0140J)).